Consider the following 556-residue polypeptide: Formate--tetrahydrofolate ligase (556 aa).

An ATP-binding site is contributed by 65–72 (TPAGEGKS).

Belongs to the formate--tetrahydrofolate ligase family.

The catalysed reaction is (6S)-5,6,7,8-tetrahydrofolate + formate + ATP = (6R)-10-formyltetrahydrofolate + ADP + phosphate. Its pathway is one-carbon metabolism; tetrahydrofolate interconversion. The chain is Formate--tetrahydrofolate ligase from Clostridium perfringens (strain ATCC 13124 / DSM 756 / JCM 1290 / NCIMB 6125 / NCTC 8237 / Type A).